An 898-amino-acid polypeptide reads, in one-letter code: Aconitate hydratase 1 (898 aa).

N-acetylalanine is present on A2. Residues Q90 and 209–211 (DSH) contribute to the substrate site. Residues C441, C507, and C510 each contribute to the [4Fe-4S] cluster site. Residues R540, R545, R703, and 784-785 (SR) each bind substrate.

It belongs to the aconitase/IPM isomerase family. As to quaternary structure, monomer. It depends on [4Fe-4S] cluster as a cofactor. In terms of tissue distribution, mostly expressed in roots, stems and leaves, also present in stems and flowers.

It is found in the cytoplasm. The protein resides in the mitochondrion. The enzyme catalyses citrate = D-threo-isocitrate. It participates in carbohydrate metabolism; tricarboxylic acid cycle; isocitrate from oxaloacetate: step 2/2. Catalyzes the isomerization of citrate to isocitrate via cis-aconitate. Contributes to oxidative stress tolerance. May have a role in respiration. The protein is Aconitate hydratase 1 of Arabidopsis thaliana (Mouse-ear cress).